Consider the following 380-residue polypeptide: MLGPLRKEHPIFRILNSTFVDLPLPSNLSIWWNFGSLLGLCLITQILTGLFLAMHYTADISLAFSSASHICRDVNYGWLLRNVHANGASLFFICMYCHIGRGLYYGGSNKIETWNVGVILFLVTVLTAFVGYVLVWGRMSFWAATVIANLVTAVPCVGTTIVQWLWGGFSVDNATLTRFFAFHFLFPFIIAALAIIDLVFLHNSGANNPVGLNSNYDKAPFHIYYTTKDTVGFIALIAALFVLALLFPCALNDPENFIPANPLSHPPHIQPEWYFLFAYAILRSIPNKLGGVIALVAAILVLFLMPLLNTSKNESNSFRPLSQATFWILVATFFVLTWIGSQPVEQPFVLIGQIASLLYFSLFIFGFPLVSSLENKMIFS.

A run of 4 helical transmembrane segments spans residues 34–54 (FGSLLGLCLITQILTGLFLAM), 78–99 (WLLRNVHANGASLFFICMYCHI), 114–134 (WNVGVILFLVTVLTAFVGYVL), and 179–199 (FFAFHFLFPFIIAALAIIDLV). Residues His84 and His98 each contribute to the heme b site. Position 183 (His183) interacts with heme b. Residue His202 participates in a ubiquinone binding. Helical transmembrane passes span 227–247 (TKDTVGFIALIAALFVLALLF), 289–309 (LGGVIALVAAILVLFLMPLLN), 321–341 (LSQATFWILVATFFVLTWIGS), and 348–369 (FVLIGQIASLLYFSLFIFGFPL).

The protein belongs to the cytochrome b family. The main subunits of complex b-c1 are: cytochrome b, cytochrome c1 and the Rieske protein. The cofactor is heme b.

It localises to the mitochondrion inner membrane. Its function is as follows. Component of the ubiquinol-cytochrome c reductase complex (complex III or cytochrome b-c1 complex) that is part of the mitochondrial respiratory chain. The b-c1 complex mediates electron transfer from ubiquinol to cytochrome c. Contributes to the generation of a proton gradient across the mitochondrial membrane that is then used for ATP synthesis. This chain is Cytochrome b (MT-CYB), found in Paracentrotus lividus (Common sea urchin).